Reading from the N-terminus, the 209-residue chain is Uracil phosphoribosyltransferase (209 aa).

5-phospho-alpha-D-ribose 1-diphosphate contacts are provided by residues R79, R104, and 131 to 139 (DPMLATGGS). Residues I194 and 199–201 (GDA) contribute to the uracil site. Residue D200 participates in 5-phospho-alpha-D-ribose 1-diphosphate binding.

Belongs to the UPRTase family. It depends on Mg(2+) as a cofactor.

It catalyses the reaction UMP + diphosphate = 5-phospho-alpha-D-ribose 1-diphosphate + uracil. Its pathway is pyrimidine metabolism; UMP biosynthesis via salvage pathway; UMP from uracil: step 1/1. Its activity is regulated as follows. Allosterically activated by GTP. In terms of biological role, catalyzes the conversion of uracil and 5-phospho-alpha-D-ribose 1-diphosphate (PRPP) to UMP and diphosphate. This is Uracil phosphoribosyltransferase from Streptococcus suis (strain 05ZYH33).